The chain runs to 354 residues: MATEQIQHIAIVGCVHGKYREMYRQLSEYEKSTGKEISFVICTGDMQTLRYEADLVYLKVPPKYKQMGDFHLYYEGKEKAPYLTLFIGGNHESSNVLLHLYNGGFVCFNMYYLGVCSCININGLRIVGVSGIYKSFDEKKPYTYPPSPNDVVSLFHTRNYVIQMLSNLSQSSQIDISLSHDWPQGIVMKGNYKQLYRFQPGFKKDGASLGSPINKVILNTLKPKYWISGHMHCEYHAEEGPTHFIALGKIGYKNAISYLDLPLKQKTDLEYDKDWVCNLIMTWPAFSNKAQFPDLSYSISELLSKRTKELDKKIIELWEKYIGLKIIYDSDTFDIQFTSRRFYIEKIYNELNIN.

A divalent metal cation is bound by residues Cys14, His16, and Asp45. RNA is bound by residues Lys59, Asn90, His91, Lys134, and His156. Asn90 contributes to the a divalent metal cation binding site. The interval 130–158 is lariat recognition loop; sequence SGIYKSFDEKKPYTYPPSPNDVVSLFHTR. His180 contributes to the a divalent metal cation binding site. Gly201, Asp205, His230, Met231, and His232 together coordinate RNA. Position 230 (His230) interacts with a divalent metal cation. His232 is a binding site for a divalent metal cation.

This sequence belongs to the lariat debranching enzyme family. It depends on Fe(2+) as a cofactor. Requires Zn(2+) as cofactor. Mn(2+) serves as cofactor.

It localises to the cytoplasm. It is found in the perinuclear region. Active in presence of diverse metals including Fe(2+), Zn(2+) and Mn(2+). Binds two metal cations in two adjacent alpha and beta metal-binding pockets. The activity is the highest with Fe(2+) bound to the 2 metal-binding sites. The activity is slightly lower with Fe(2+) bound to the beta site and Zn(2+) to the alpha site and decreases further when only Zn(2+) is bound. No activity with Mn(2+). However, another study showed activity with Mn(2+) bound to the beta site and Zn(2+) to the alpha site. Mn(2+) appears unable to bind to the alpha site. Cleaves the 2'-5' phosphodiester linkage at the branch point of excised lariat intron RNA and converts them into linear molecules that can be subsequently degraded, thereby facilitating ribonucleotide turnover. The chain is Lariat debranching enzyme from Entamoeba histolytica (strain ATCC 30459 / HM-1:IMSS / ABRM).